A 131-amino-acid chain; its full sequence is RxLR effector protein 62 (131 aa).

Positions 1–19 are cleaved as a signal peptide; that stretch reads MRLDILLFTLSSSTSLALS. Positions 49–60 match the RxLR-dEER motif; that stretch reads RHLREEPANEAR. Asparagine 61 carries N-linked (GlcNAc...) asparagine glycosylation.

This sequence belongs to the RxLR effector family.

The protein resides in the secreted. It is found in the host cell. Its function is as follows. Secreted effector that suppresses callose deposition, a hallmark of pathogen-associated molecular pattern (PAMP)-triggered immunity (PTI) and renders host plants more susceptible to bacterial infection. Reduces host plant responsiveness to salicylic acid (SA) in haustoriated cells into which host-translocated effectors are delivered. In Hyaloperonospora arabidopsidis (strain Emoy2) (Downy mildew agent), this protein is RxLR effector protein 62.